The chain runs to 174 residues: Austinoid biosynthesis clusters protein H (174 aa).

Belongs to the trt14 isomerase family. As to quaternary structure, homodimer.

It participates in secondary metabolite biosynthesis; terpenoid biosynthesis. Functionally, part of the gene cluster B that mediates the biosynthesis of austinol and dehydroaustinol, two fungal meroterpenoids. The first step of the pathway is the synthesis of 3,5-dimethylorsellinic acid by the polyketide synthase ausA. 3,5-dimethylorsellinic acid is then prenylated by the polyprenyl transferase ausN. Further epoxidation by the FAD-dependent monooxygenase ausM and cyclization by the probable terpene cyclase ausL lead to the formation of protoaustinoid A. Protoaustinoid A is then oxidized to spiro-lactone preaustinoid A3 by the combined action of the FAD-binding monooxygenases ausB and ausC, and the dioxygenase ausE. Acid-catalyzed keto-rearrangement and ring contraction of the tetraketide portion of preaustinoid A3 by ausJ lead to the formation of preaustinoid A4. The aldo-keto reductase ausK, with the help of ausH, is involved in the next step by transforming preaustinoid A4 into isoaustinone which is in turn hydroxylated by the P450 monooxygenase ausI to form austinolide. Finally, the cytochrome P450 monooxygenase ausG modifies austinolide to austinol. Austinol can be further modified to dehydroaustinol which forms a diffusible complex with diorcinol that initiates conidiation. Due to genetic rearrangements of the clusters and the subsequent loss of some enzymes, the end products of the Emericella nidulans austinoid biosynthesis clusters are austinol and dehydroaustinol, even if additional enzymes, such as the O-acetyltransferase ausQ and the cytochrome P450 monooxygenase ausR are still functional. The polypeptide is Austinoid biosynthesis clusters protein H (Emericella nidulans (strain FGSC A4 / ATCC 38163 / CBS 112.46 / NRRL 194 / M139) (Aspergillus nidulans)).